We begin with the raw amino-acid sequence, 339 residues long: Probable cytosolic iron-sulfur protein assembly protein CIAO1 (339 aa).

WD repeat units follow at residues 14 to 53 (HPDS…WICK), 59 to 98 (GHQR…FECV), 103 to 142 (GHEN…EYEC), 148 to 187 (SHTQ…WVCC), 192 to 231 (GHES…NEQG), 250 to 289 (FHTR…DPQQ), and 301 to 339 (AHSQ…PAGL). The short motif at 176–178 (LYQ) is the LYR motif; required for interaction with HSC20 element.

The protein belongs to the WD repeat CIA1 family. As to quaternary structure, component of the CIA complex. Interacts with CIAO2A and forms a complex with CIAO2B and MMS19; the interactions with CIAO2A and CIAO2B are mutually exclusive. Interacts with CHD1L, ERCC2, IREB2 and POLD1. Component of the MMXD complex, which includes CIAO1, ERCC2, CIAO2B, MMS19 and SLC25A5. Interacts with WT1. Interacts with CIAO3. Interacts (via LYR motif) with HSC20.

The protein resides in the cytoplasm. Key component of the cytosolic iron-sulfur protein assembly (CIA) complex, a multiprotein complex that mediates the incorporation of iron-sulfur cluster into extramitochondrial Fe/S proteins. As a CIA complex component, interacts specifically with CIAO2A or CIAO2B and MMS19 to assist different branches of iron-sulfur protein assembly, depending of its interactors. The complex CIAO1:CIAO2B:MMS19 binds to and facilitates the assembly of most cytosolic-nuclear Fe/S proteins. CIAO1:CIAO2A specifically matures ACO1 and stabilizes IREB2. Seems to specifically modulate the transactivation activity of WT1. As part of the mitotic spindle-associated MMXD complex it may play a role in chromosome segregation. This chain is Probable cytosolic iron-sulfur protein assembly protein CIAO1, found in Rattus norvegicus (Rat).